The primary structure comprises 131 residues: Small ribosomal subunit protein uS8 (131 aa).

Belongs to the universal ribosomal protein uS8 family. Part of the 30S ribosomal subunit. Contacts proteins S5 and S12.

One of the primary rRNA binding proteins, it binds directly to 16S rRNA central domain where it helps coordinate assembly of the platform of the 30S subunit. In Acidithiobacillus ferrooxidans (strain ATCC 23270 / DSM 14882 / CIP 104768 / NCIMB 8455) (Ferrobacillus ferrooxidans (strain ATCC 23270)), this protein is Small ribosomal subunit protein uS8.